Reading from the N-terminus, the 180-residue chain is Small ribosomal subunit protein uS5 (180 aa).

An S5 DRBM domain is found at Leu-13 to Val-76.

The protein belongs to the universal ribosomal protein uS5 family. Part of the 30S ribosomal subunit. Contacts proteins S4 and S8.

Its function is as follows. With S4 and S12 plays an important role in translational accuracy. Located at the back of the 30S subunit body where it stabilizes the conformation of the head with respect to the body. The polypeptide is Small ribosomal subunit protein uS5 (Roseiflexus sp. (strain RS-1)).